A 227-amino-acid polypeptide reads, in one-letter code: Fibrillarin-like rRNA/tRNA 2'-O-methyltransferase (227 aa).

Residues Thr86–Thr87, Glu105–Phe106, Asp130–Ala131, and Asp150–Gln153 each bind S-adenosyl-L-methionine.

This sequence belongs to the methyltransferase superfamily. Fibrillarin family. In terms of assembly, interacts with nop5. Component of box C/D small ribonucleoprotein (sRNP) particles that contain rpl7ae, FlpA and nop5, plus a guide RNA. These sRNP particles form homodimers, giving rise to an asymmetric holoenzyme.

In terms of biological role, involved in pre-rRNA and tRNA processing. Utilizes the methyl donor S-adenosyl-L-methionine to catalyze the site-specific 2'-hydroxyl methylation of ribose moieties in rRNA and tRNA. Site specificity is provided by a guide RNA that base pairs with the substrate. Methylation occurs at a characteristic distance from the sequence involved in base pairing with the guide RNA. The polypeptide is Fibrillarin-like rRNA/tRNA 2'-O-methyltransferase (Pyrococcus furiosus (strain ATCC 43587 / DSM 3638 / JCM 8422 / Vc1)).